A 200-amino-acid polypeptide reads, in one-letter code: MHDYLYLASQSPRRRELLTQLGVRYELLLADDEEDAEALEVVQPGETPDDYVQRVCALKAEAALRRRERRALPDAPILTSDTTVCLGGEILGKPGDGADASAMLKALSGSTHRVLTAVTVVSTLGMHHALSISRVTFRAMTAAEIERYVDSGEPLGKAGAYGIQGRAAEFVERIEGSYSGIMGLPLFETAALLRQARLRF.

Catalysis depends on D81, which acts as the Proton acceptor.

The protein belongs to the Maf family. YhdE subfamily. A divalent metal cation serves as cofactor.

The protein resides in the cytoplasm. It catalyses the reaction dTTP + H2O = dTMP + diphosphate + H(+). The catalysed reaction is UTP + H2O = UMP + diphosphate + H(+). Nucleoside triphosphate pyrophosphatase that hydrolyzes dTTP and UTP. May have a dual role in cell division arrest and in preventing the incorporation of modified nucleotides into cellular nucleic acids. The sequence is that of dTTP/UTP pyrophosphatase from Cupriavidus pinatubonensis (strain JMP 134 / LMG 1197) (Cupriavidus necator (strain JMP 134)).